The sequence spans 303 residues: Probable cell division protein WhiA (303 aa).

Residues 272-303 (SIQQVADALEFPITKSGVNHRLRKINKIADDL) constitute a DNA-binding region (H-T-H motif).

The protein belongs to the WhiA family.

Its function is as follows. Involved in cell division and chromosome segregation. The polypeptide is Probable cell division protein WhiA (Streptococcus pyogenes serotype M12 (strain MGAS2096)).